The primary structure comprises 175 residues: Peptide methionine sulfoxide reductase MsrA (175 aa).

Cysteine 10 is a catalytic residue.

The protein belongs to the MsrA Met sulfoxide reductase family.

The enzyme catalyses L-methionyl-[protein] + [thioredoxin]-disulfide + H2O = L-methionyl-(S)-S-oxide-[protein] + [thioredoxin]-dithiol. It catalyses the reaction [thioredoxin]-disulfide + L-methionine + H2O = L-methionine (S)-S-oxide + [thioredoxin]-dithiol. Functionally, has an important function as a repair enzyme for proteins that have been inactivated by oxidation. Catalyzes the reversible oxidation-reduction of methionine sulfoxide in proteins to methionine. The chain is Peptide methionine sulfoxide reductase MsrA from Clavibacter michiganensis subsp. michiganensis (strain NCPPB 382).